We begin with the raw amino-acid sequence, 414 residues long: Patatin-like protein 1 (414 aa).

The region spanning 22-228 (LSLDGGGVRG…TANNPTLVAM (207 aa)) is the PNPLA domain. The GXGXXG motif lies at 26-31 (GGGVRG). Residues 64-68 (GTSTG) carry the GXSXG motif. Ser-66 (nucleophile) is an active-site residue. Asp-215 (proton acceptor) is an active-site residue. The short motif at 215–217 (DGA) is the DGA/G element. Ser-399 bears the Phosphoserine mark.

This sequence belongs to the patatin family. Post-translationally, phosphorylated at Ser-399 by CPK3. Phosphorylation enhances PLP1 activity towards phosphatidylcholine. As to expression, expressed specifically in roots and root hairs.

It localises to the cytoplasm. Possesses non-specific lipolytic acyl hydrolase (LAH) activity. Catalyzes the hydrolysis of the neutral lipids monogalactosyldiacylglycerol (MGDG), digalactosyldiacylglycerol (DGDG) and phosphatidylglycerol (PG), and less efficiently the polar lipids phosphatidylcholine (PC) and phosphatidylinositol (PI), but not the storage lipid triacylglycerol (TAG). May play a role in root development. The polypeptide is Patatin-like protein 1 (PLP1) (Arabidopsis thaliana (Mouse-ear cress)).